Reading from the N-terminus, the 766-residue chain is Phosphoribosylformylglycinamidine synthase subunit PurL (766 aa).

Residue histidine 66 is part of the active site. ATP is bound by residues tyrosine 69 and lysine 113. Glutamate 115 contributes to the Mg(2+) binding site. Substrate contacts are provided by residues 116 to 119 (SHNH) and arginine 138. Histidine 117 (proton acceptor) is an active-site residue. Aspartate 139 provides a ligand contact to Mg(2+). Glutamine 264 lines the substrate pocket. Aspartate 292 contributes to the Mg(2+) binding site. Residue 336 to 338 (ESQ) coordinates substrate. ATP is bound by residues asparagine 524 and glycine 561. Asparagine 562 provides a ligand contact to Mg(2+). Residue serine 564 participates in substrate binding.

Belongs to the FGAMS family. In terms of assembly, monomer. Part of the FGAM synthase complex composed of 1 PurL, 1 PurQ and 2 PurS subunits.

Its subcellular location is the cytoplasm. The catalysed reaction is N(2)-formyl-N(1)-(5-phospho-beta-D-ribosyl)glycinamide + L-glutamine + ATP + H2O = 2-formamido-N(1)-(5-O-phospho-beta-D-ribosyl)acetamidine + L-glutamate + ADP + phosphate + H(+). It participates in purine metabolism; IMP biosynthesis via de novo pathway; 5-amino-1-(5-phospho-D-ribosyl)imidazole from N(2)-formyl-N(1)-(5-phospho-D-ribosyl)glycinamide: step 1/2. In terms of biological role, part of the phosphoribosylformylglycinamidine synthase complex involved in the purines biosynthetic pathway. Catalyzes the ATP-dependent conversion of formylglycinamide ribonucleotide (FGAR) and glutamine to yield formylglycinamidine ribonucleotide (FGAM) and glutamate. The FGAM synthase complex is composed of three subunits. PurQ produces an ammonia molecule by converting glutamine to glutamate. PurL transfers the ammonia molecule to FGAR to form FGAM in an ATP-dependent manner. PurS interacts with PurQ and PurL and is thought to assist in the transfer of the ammonia molecule from PurQ to PurL. This Mycobacterium tuberculosis (strain CDC 1551 / Oshkosh) protein is Phosphoribosylformylglycinamidine synthase subunit PurL.